Reading from the N-terminus, the 189-residue chain is HGPRTase-like protein 2 (189 aa).

This sequence belongs to the purine/pyrimidine phosphoribosyltransferase family. Archaeal HPRT subfamily.

Functionally, may catalyze a purine salvage reaction, the substrate is unknown. This chain is HGPRTase-like protein 2, found in Haloarcula marismortui (strain ATCC 43049 / DSM 3752 / JCM 8966 / VKM B-1809) (Halobacterium marismortui).